We begin with the raw amino-acid sequence, 215 residues long: [PSI+] inducibility protein 3 (215 aa).

At S2 the chain carries N-acetylserine. Phosphoserine occurs at positions 52 and 55. Residues 54 to 113 (ASLEYVEALYQFDPQQDGDLGLKPGDKVQLLEKLSPEWYKGSCNGRTGIFPANYVKPAFS) form the SH3 domain. K80 participates in a covalent cross-link: Glycyl lysine isopeptide (Lys-Gly) (interchain with G-Cter in ubiquitin). The tract at residues 114–189 (GSNGPSNLPP…HQSSHSHLKS (76 aa)) is disordered. Residues 124–127 (PPQY) carry the PY motif motif.

It belongs to the LSB1 family. In terms of assembly, interacts with LAS17, RSP5 and SUP35. Post-translationally, ubiquitinated by RSP5. Ubiquitination reduces the protein abundance and its prion-inducing ability.

It is found in the cytoplasm. Its subcellular location is the nucleus. It localises to the cytoskeleton. The protein localises to the actin patch. In terms of biological role, overproduction promotes the de novo induction of the [PSI+] prion form of SUP35. The prion-inducing effect depends on the association with the actin cytoskeleton. Also implicated in prion maintenance during heat stress. This is [PSI+] inducibility protein 3 (PIN3) from Saccharomyces cerevisiae (strain ATCC 204508 / S288c) (Baker's yeast).